A 58-amino-acid polypeptide reads, in one-letter code: Preprotein translocase subunit SecG (58 aa).

Topologically, residues 1 to 33 (MARRRKYEGLNPFVAAGLIKFSEEGELEKIKLS) are cytoplasmic. The chain crosses the membrane as a helical span at residues 34-55 (PKAAIAISLAIIAAILALNLLL). Over 56–58 (PPP) the chain is Extracellular.

Belongs to the SEC61-beta family. In terms of assembly, component of the protein translocase complex. Heterotrimer consisting of alpha (SecY), beta (SecG) and gamma (SecE) subunits. Can form oligomers of the heterotrimer.

Its subcellular location is the cell membrane. Involved in protein export. The function of the beta subunit is unknown, but it may be involved in stabilization of the trimeric complex. In Pyrobaculum calidifontis (strain DSM 21063 / JCM 11548 / VA1), this protein is Preprotein translocase subunit SecG.